The sequence spans 314 residues: MIEIEKPKIETVEISDDAKYGKFVVEPLERGYGTTLGNSLRRILLSSLPGAAVTSIQIDGVLHEFSTIEGVVEDVTTIILNIKKLALKIYSEEEKTLEIDVQDEGTVTAADITHDSDIEILNPDLHIATLGKNASFRVRLTAQRGRGYNPADANKRDDQPIGVIPIDSIYTPVSRVTYQVENTRVGQITNYDKLTLDVWTDGSTGPKEAIALGSKILTEHLNIFVGLTDEAQHAEIMVEKEEDQKEKVLEMTIEELDLSVRSYNCLKRAGINTVQELANKTEEDMMKVRNLGRKSLEEVKAKLEELGLGLRKDD.

An alpha N-terminal domain (alpha-NTD) region spans residues 1–228; that stretch reads MIEIEKPKIE…EHLNIFVGLT (228 aa). The alpha C-terminal domain (alpha-CTD) stretch occupies residues 246–314; sequence EKVLEMTIEE…ELGLGLRKDD (69 aa).

The protein belongs to the RNA polymerase alpha chain family. As to quaternary structure, homodimer. The RNAP catalytic core consists of 2 alpha, 1 beta, 1 beta' and 1 omega subunit. When a sigma factor is associated with the core the holoenzyme is formed, which can initiate transcription.

The enzyme catalyses RNA(n) + a ribonucleoside 5'-triphosphate = RNA(n+1) + diphosphate. DNA-dependent RNA polymerase catalyzes the transcription of DNA into RNA using the four ribonucleoside triphosphates as substrates. The sequence is that of DNA-directed RNA polymerase subunit alpha from Bacillus pumilus (strain SAFR-032).